Here is a 382-residue protein sequence, read N- to C-terminus: 1-deoxy-D-xylulose 5-phosphate reductoisomerase (382 aa).

Residues T10, G11, S12, I13, G36, and N122 each coordinate NADPH. Position 123 (K123) interacts with 1-deoxy-D-xylulose 5-phosphate. E124 lines the NADPH pocket. Residue D148 participates in Mn(2+) binding. S149, E150, S174, and H197 together coordinate 1-deoxy-D-xylulose 5-phosphate. Residue E150 coordinates Mn(2+). G203 contributes to the NADPH binding site. The 1-deoxy-D-xylulose 5-phosphate site is built by S210, N215, K216, and E219. A Mn(2+)-binding site is contributed by E219.

This sequence belongs to the DXR family. Mg(2+) serves as cofactor. Requires Mn(2+) as cofactor.

The enzyme catalyses 2-C-methyl-D-erythritol 4-phosphate + NADP(+) = 1-deoxy-D-xylulose 5-phosphate + NADPH + H(+). The protein operates within isoprenoid biosynthesis; isopentenyl diphosphate biosynthesis via DXP pathway; isopentenyl diphosphate from 1-deoxy-D-xylulose 5-phosphate: step 1/6. Functionally, catalyzes the NADPH-dependent rearrangement and reduction of 1-deoxy-D-xylulose-5-phosphate (DXP) to 2-C-methyl-D-erythritol 4-phosphate (MEP). The sequence is that of 1-deoxy-D-xylulose 5-phosphate reductoisomerase from Chlorobium limicola (strain DSM 245 / NBRC 103803 / 6330).